The primary structure comprises 698 residues: tRNA (guanine(37)-N(1))-methyltransferase (698 aa).

The tract at residues 207–242 (SPPSVSLTENQDGDPQAQDSLRAVAAPPSPSSRKRG) is disordered. Residues His427, 465-466 (DL), 494-495 (DG), and Asn536 each bind S-adenosyl-L-methionine.

The protein belongs to the class I-like SAM-binding methyltransferase superfamily. TRM5/TYW2 family. Monomer.

Its subcellular location is the mitochondrion matrix. The protein localises to the nucleus. It is found in the cytoplasm. It carries out the reaction guanosine(37) in tRNA + S-adenosyl-L-methionine = N(1)-methylguanosine(37) in tRNA + S-adenosyl-L-homocysteine + H(+). Specifically methylates the N1 position of guanosine-37 in various cytoplasmic and mitochondrial tRNAs. Methylation is not dependent on the nature of the nucleoside 5' of the target nucleoside. This is the first step in the biosynthesis of wybutosine (yW), a modified base adjacent to the anticodon of tRNAs and required for accurate decoding. The polypeptide is tRNA (guanine(37)-N(1))-methyltransferase (Leishmania braziliensis).